Reading from the N-terminus, the 60-residue chain is Small ribosomal subunit protein bS21 (60 aa).

The segment at 36–60 is disordered; that stretch reads QFFETPQEKHKRKEATRRRQRSRRR. The segment covering 44-60 has biased composition (basic residues); that stretch reads KHKRKEATRRRQRSRRR.

The protein belongs to the bacterial ribosomal protein bS21 family.

The polypeptide is Small ribosomal subunit protein bS21 (rpsU) (Synechocystis sp. (strain ATCC 27184 / PCC 6803 / Kazusa)).